The primary structure comprises 232 residues: Dephospho-CoA kinase (232 aa).

Residues 3–206 (IVGLTGGIAS…RPLTWIEFWR (204 aa)) enclose the DPCK domain. 8–15 (GGIASGKS) serves as a coordination point for ATP.

Belongs to the CoaE family.

Its subcellular location is the peroxisome. It carries out the reaction 3'-dephospho-CoA + ATP = ADP + CoA + H(+). Its pathway is cofactor biosynthesis; coenzyme A biosynthesis; CoA from (R)-pantothenate: step 5/5. In terms of biological role, catalyzes the phosphorylation of the 3'-hydroxyl group of dephosphocoenzyme A to form coenzyme A. The protein is Dephospho-CoA kinase of Arabidopsis thaliana (Mouse-ear cress).